The primary structure comprises 872 residues: DNA mismatch repair protein MutS (872 aa).

An ATP-binding site is contributed by glycine 626–serine 633.

This sequence belongs to the DNA mismatch repair MutS family.

Its function is as follows. This protein is involved in the repair of mismatches in DNA. It is possible that it carries out the mismatch recognition step. This protein has a weak ATPase activity. The polypeptide is DNA mismatch repair protein MutS (Chlorobium phaeobacteroides (strain DSM 266 / SMG 266 / 2430)).